The primary structure comprises 362 residues: Serpentine receptor class delta-2 (362 aa).

The next 7 helical transmembrane spans lie at 27-47 (LSCL…YLIW), 57-77 (YAIY…ISFF), 104-124 (FCYF…WILL), 144-164 (LIRN…VYVF), 209-229 (LISI…ILYF), 264-284 (GIPI…FGII), and 292-312 (ITFR…IIFV).

Belongs to the nematode receptor-like protein srd family.

It is found in the membrane. Its function is as follows. Thought to be a chemosensory receptor. The polypeptide is Serpentine receptor class delta-2 (srd-2) (Caenorhabditis elegans).